A 450-amino-acid chain; its full sequence is E3 ubiquitin-protein ligase XB3 (450 aa).

6 ANK repeats span residues 11–40, 46–75, 79–108, 113–142, 158–187, and 195–225; these read GDEHDFFRAAQLGDLDALAALLAADPSLAR, DRLSVLHIAAANGRIEVLSMFLDRGAPPDA, HKQTPLMLAAMHGKIDCVLKLLQADANILM, HARTCLHHAAYYGHVDCLQAILAAAQTTPV, HGATPLHLAARQGRPGCVQVLLENGAIVSA, and PGSTSLHLAARSGNLDCIRKLLAWGADRLQR. The segment at 291–312 is disordered; that stretch reads ILNGTKYSLPSPSPGDDSADDD. The RING-type zinc-finger motif lies at 323-372; sequence CCICFDQACTIEVQDCGHQMCAPCTLALCCHNKPNPTTLTPPSPACPFCR. The disordered stretch occupies residues 385–450; sequence SACDPDKPSS…SNLDKPEHDL (66 aa).

Interacts (via ankyrin repeats) with XA21. Phosphorylated by XA21.

The enzyme catalyses S-ubiquitinyl-[E2 ubiquitin-conjugating enzyme]-L-cysteine + [acceptor protein]-L-lysine = [E2 ubiquitin-conjugating enzyme]-L-cysteine + N(6)-ubiquitinyl-[acceptor protein]-L-lysine.. It functions in the pathway protein modification; protein ubiquitination. Functionally, E3 ubiquitin-protein ligase required for full accumulation of the LRR receptor kinase XA21 and XA21-mediated disease resistance. Binding to XA21 may stabilize the receptor kinase and maintain its protein level. Autoubiquitinated in vitro. This chain is E3 ubiquitin-protein ligase XB3 (XB3), found in Oryza sativa subsp. japonica (Rice).